The chain runs to 185 residues: Peptidyl-tRNA hydrolase (185 aa).

Position 12 (phenylalanine 12) interacts with tRNA. Residue histidine 17 is the Proton acceptor of the active site. Tyrosine 61, asparagine 63, and asparagine 109 together coordinate tRNA.

Belongs to the PTH family. In terms of assembly, monomer.

Its subcellular location is the cytoplasm. The enzyme catalyses an N-acyl-L-alpha-aminoacyl-tRNA + H2O = an N-acyl-L-amino acid + a tRNA + H(+). Functionally, hydrolyzes ribosome-free peptidyl-tRNAs (with 1 or more amino acids incorporated), which drop off the ribosome during protein synthesis, or as a result of ribosome stalling. Its function is as follows. Catalyzes the release of premature peptidyl moieties from peptidyl-tRNA molecules trapped in stalled 50S ribosomal subunits, and thus maintains levels of free tRNAs and 50S ribosomes. This Borrelia garinii subsp. bavariensis (strain ATCC BAA-2496 / DSM 23469 / PBi) (Borreliella bavariensis) protein is Peptidyl-tRNA hydrolase.